The primary structure comprises 518 residues: Cytochrome P450 709B3 (518 aa).

A helical membrane pass occupies residues 3 to 23 (LISTINLLTIVLLLFVVSKIW). Cys465 serves as a coordination point for heme.

This sequence belongs to the cytochrome P450 family. The cofactor is heme. As to expression, highly expressed in rosette leaves and siliques, and at lower levels in flowers.

The protein resides in the membrane. Functionally, plays a role in abscisic acid (ABA) and salt stress response. May regulate the salt stress response independently of well-characterized pathways. Does not function as cytokinin hydroxylase in yeast heterologous system. The polypeptide is Cytochrome P450 709B3 (Arabidopsis thaliana (Mouse-ear cress)).